We begin with the raw amino-acid sequence, 333 residues long: Biotin synthase (333 aa).

In terms of domain architecture, Radical SAM core spans 40–269 (YRVQLASLLS…HARVRLSAGR (230 aa)). Positions 55, 59, and 62 each coordinate [4Fe-4S] cluster. [2Fe-2S] cluster contacts are provided by cysteine 100, cysteine 132, cysteine 192, and arginine 264.

It belongs to the radical SAM superfamily. Biotin synthase family. Homodimer. It depends on [4Fe-4S] cluster as a cofactor. Requires [2Fe-2S] cluster as cofactor.

It carries out the reaction (4R,5S)-dethiobiotin + (sulfur carrier)-SH + 2 reduced [2Fe-2S]-[ferredoxin] + 2 S-adenosyl-L-methionine = (sulfur carrier)-H + biotin + 2 5'-deoxyadenosine + 2 L-methionine + 2 oxidized [2Fe-2S]-[ferredoxin]. It functions in the pathway cofactor biosynthesis; biotin biosynthesis; biotin from 7,8-diaminononanoate: step 2/2. Catalyzes the conversion of dethiobiotin (DTB) to biotin by the insertion of a sulfur atom into dethiobiotin via a radical-based mechanism. This is Biotin synthase from Synechococcus sp. (strain CC9902).